A 190-amino-acid chain; its full sequence is DNA-invertase (190 aa).

A Resolvase/invertase-type recombinase catalytic domain is found at 2–135 (ATIGYIRVST…AGLAAARAQG (134 aa)). Residue Ser10 is the O-(5'-phospho-DNA)-serine intermediate of the active site. A DNA-binding region (H-T-H motif) is located at residues 162 to 181 (RQQLAIIFGIGVSTLYRYFP).

Belongs to the site-specific recombinase resolvase family.

In terms of biological role, a DNA fragment of approximately 900 base pairs, adjacent to the fljB (H2) gene, which specifies the synthesis of phase-2 flagellin, can exist in either orientation with respect to fljB. The orientation of the inversion region controls expression of fljB. The hin gene occupies about two-thirds of the inversion region; it is required for the inversion of the fljB controlling region. In Salmonella abortus-equi, this protein is DNA-invertase (hin).